We begin with the raw amino-acid sequence, 699 residues long: Glutamine--fructose-6-phosphate aminotransferase [isomerizing] (699 aa).

The Nucleophile role is filled by Cys2. The Glutamine amidotransferase type-2 domain maps to 2 to 303 (CGIFGYANFS…DNDIVHISNG (302 aa)). SIS domains follow at residues 377–516 (HVSG…QNLV) and 544–689 (SVKS…ADFP).

The catalysed reaction is D-fructose 6-phosphate + L-glutamine = D-glucosamine 6-phosphate + L-glutamate. The protein operates within nucleotide-sugar biosynthesis; UDP-N-acetyl-alpha-D-glucosamine biosynthesis; alpha-D-glucosamine 6-phosphate from D-fructose 6-phosphate: step 1/1. In terms of biological role, involved in amino sugar synthesis (formation of chitin, supplies the amino sugars of asparagine-linked oligosaccharides of glycoproteins). In Encephalitozoon cuniculi (strain GB-M1) (Microsporidian parasite), this protein is Glutamine--fructose-6-phosphate aminotransferase [isomerizing] (GFA1).